The sequence spans 341 residues: Anthranilate phosphoribosyltransferase (341 aa).

5-phospho-alpha-D-ribose 1-diphosphate-binding positions include glycine 82, 85 to 86 (GD), threonine 90, 92 to 95 (NIST), 110 to 118 (KHGNRAITS), and threonine 122. An anthranilate-binding site is contributed by glycine 82. Mg(2+) is bound at residue serine 94. Asparagine 113 contributes to the anthranilate binding site. Arginine 168 is an anthranilate binding site. Mg(2+) contacts are provided by aspartate 226 and glutamate 227.

It belongs to the anthranilate phosphoribosyltransferase family. Homodimer. Mg(2+) serves as cofactor.

The enzyme catalyses N-(5-phospho-beta-D-ribosyl)anthranilate + diphosphate = 5-phospho-alpha-D-ribose 1-diphosphate + anthranilate. Its pathway is amino-acid biosynthesis; L-tryptophan biosynthesis; L-tryptophan from chorismate: step 2/5. Catalyzes the transfer of the phosphoribosyl group of 5-phosphorylribose-1-pyrophosphate (PRPP) to anthranilate to yield N-(5'-phosphoribosyl)-anthranilate (PRA). This Caulobacter vibrioides (strain ATCC 19089 / CIP 103742 / CB 15) (Caulobacter crescentus) protein is Anthranilate phosphoribosyltransferase.